The primary structure comprises 390 residues: F-box/kelch-repeat protein At3g04660 (390 aa).

Residues 18-67 (YDPSSILPLELKIEILMKSPPKSIAKLGFVSNHWSSIIRGQVFTDLYMRR) form the F-box domain. 2 Kelch repeats span residues 115 to 161 (FSPP…FGYD) and 272 to 323 (MVDH…DQRV).

As to quaternary structure, part of a SCF (ASK-cullin-F-box) protein ligase complex. Interacts with SKP1A/ASK1, SKP1B/ASK2, ASK11 and ASK13.

The protein resides in the nucleus. Its pathway is protein modification; protein ubiquitination. In terms of biological role, component of SCF(ASK-cullin-F-box) E3 ubiquitin ligase complexes, which may mediate the ubiquitination and subsequent proteasomal degradation of target proteins. This chain is F-box/kelch-repeat protein At3g04660, found in Arabidopsis thaliana (Mouse-ear cress).